The sequence spans 426 residues: MKIVPPRGMQDFLPHEKEHRDRITEVIYKSYISHGFNPIETPSLENIERLACGVGQENEKLTYKIIRRGLTGAQTVQHPDELIDLGLRFDLTIPLVRFWNTNRARLPKIFRSLQIGHVWRAEKPQKGRRRQFIQCDIDIIGQPEILAEIELLVATLSTLEQLGIRTPKLHINDRRILFSMLNNLGVPHSCHVYVSIVLDKLRKIGLDLVKQELCEFPALVAYLASSVNSNTGSTDLCFDVSSTKDITHIRRTIQSALPHGCKFDCEDLCRIIASVNEFTQTGVFFDPLLVRGMGYYTGPIFEILHDDYSIAGGGRYDGLVERLGGLPTPACGFSIGFERVLGLIKESVSLDPKKMILLYDPKVDPNLVVSVKLEFISKGFIVRPELASRSRRNQIELAKREGFGAFLYLDPLSPPDGLLAKVKPIL.

Belongs to the class-II aminoacyl-tRNA synthetase family. In terms of assembly, homodimer.

It localises to the cytoplasm. It catalyses the reaction tRNA(His) + L-histidine + ATP = L-histidyl-tRNA(His) + AMP + diphosphate + H(+). The chain is Probable histidine--tRNA ligase (hisS) from Tropheryma whipplei (strain TW08/27) (Whipple's bacillus).